The primary structure comprises 473 residues: Zinc finger and SCAN domain-containing protein 21 (473 aa).

Residue lysine 27 forms a Glycyl lysine isopeptide (Lys-Gly) (interchain with G-Cter in SUMO2) linkage. Residues 45–127 (RQRFRQFGYH…TLLEDLEREL (83 aa)) form the SCAN box domain. Positions 127-167 (LDEPGHQVSTPPNEQKPVWEKISSSGTAKESPSSMQPQPLE) are disordered. Residues 148 to 165 (ISSSGTAKESPSSMQPQP) are compositionally biased toward polar residues. Residues lysine 221 and lysine 232 each participate in a glycyl lysine isopeptide (Lys-Gly) (interchain with G-Cter in SUMO2) cross-link. The interval 244-272 (LENEKGTKPPLQEAGSKKGRESVPTKPTP) is disordered. Over residues 258–272 (GSKKGRESVPTKPTP) the composition is skewed to basic and acidic residues. 7 consecutive C2H2-type zinc fingers follow at residues 277 to 299 (YICAECGKAFSNSSNLTKHRRTH), 305 to 327 (YVCTKCGKAFSHSSNLTLHYRTH), 333 to 354 (YDCKCGKAFGQSSDLLKHQRMH), 360 to 382 (YQCKDCGKAFSGKGSLIRHYRIH), 388 to 410 (YQCNECGKSFSQHAGLSSHQRLH), 416 to 438 (YKCKECGKAFNHSSNFNKHHRIH), and 444 to 466 (YWCHHCGKTFCSKSNLSKHQRVH). A Glycyl lysine isopeptide (Lys-Gly) (interchain with G-Cter in SUMO2) cross-link involves residue lysine 349.

Belongs to the krueppel C2H2-type zinc-finger protein family.

The protein localises to the nucleus. Its function is as follows. Strong transcriptional activator. Plays an important role in spermatogenesis; essential for the progression of meiotic prophase I in spermatocytes. In Pan troglodytes (Chimpanzee), this protein is Zinc finger and SCAN domain-containing protein 21 (ZSCAN21).